The sequence spans 250 residues: tRNA pseudouridine synthase A (250 aa).

Catalysis depends on aspartate 52, which acts as the Nucleophile. Position 110 (tyrosine 110) interacts with substrate.

This sequence belongs to the tRNA pseudouridine synthase TruA family. Homodimer.

The enzyme catalyses uridine(38/39/40) in tRNA = pseudouridine(38/39/40) in tRNA. Functionally, formation of pseudouridine at positions 38, 39 and 40 in the anticodon stem and loop of transfer RNAs. The polypeptide is tRNA pseudouridine synthase A (Citrifermentans bemidjiense (strain ATCC BAA-1014 / DSM 16622 / JCM 12645 / Bem) (Geobacter bemidjiensis)).